Consider the following 1736-residue polypeptide: Centrosomal protein of 152 kDa (1736 aa).

Residues 1-60 form an interaction with PLK4 region; it reads MSLEFGSVALQTQNEDEEFDKEDFEREKELQQLLTDLPHDMLDDELSSPERHDSDCSMDG. The tract at residues 1–127 is disordered; the sequence is MSLEFGSVAL…SGYSPPGKRE (127 aa). 2 stretches are compositionally biased toward basic and acidic residues: residues 61-82 and 94-105; these read RAAEPHPSEHLERKWIERDILP and EENRSKTEDQHL. Coiled coils occupy residues 228 to 481, 552 to 651, 692 to 776, 835 to 868, 950 to 1075, and 1205 to 1315; these read IIQL…AELG, HLVS…QEFD, LEVY…TERQ, AAVSKAEAAAVLAEEQARQVQQEKELATKEALRK, NVMS…YEED, and GHCF…KIKR. A disordered region spans residues 571–592; the sequence is FQQSKDGDSGMETKTDTSEKTT. Residues 575-592 show a composition bias toward basic and acidic residues; that stretch reads KDGDSGMETKTDTSEKTT. Threonine 1277 carries the post-translational modification Phosphothreonine. 4 disordered regions span residues 1416–1479, 1543–1562, 1574–1614, and 1677–1736; these read GTER…ASTA, EKNSSPRCISESRHTTLRSP, GSPT…SDST, and QQGK…SPLE. Over residues 1462-1473 the composition is skewed to basic and acidic residues; sequence RRLEESKHREMR. 2 stretches are compositionally biased toward polar residues: residues 1576–1595 and 1603–1614; these read PTETDSIASEKSQGVGSQDS and PSSSPAWPSDST. The residue at position 1714 (lysine 1714) is an N6-acetyllysine.

This sequence belongs to the CEP152 family. As to quaternary structure, interacts (via N-terminus) with PLK4; the interaction is mutally exclusive with a PLK4:CEP192 interaction. Interacts (via C-terminus) with CPAP (via-N-terminus). Interacts with CINP. Interacts with CDK5RAP2, WDR62, CEP63 and CEP131. CEP63, CDK5RAP2, CEP152, WDR62 are proposed to form a stepwise assembled complex at the centrosome forming a ring near parental centrioles. Interacts with DEUP1; this interaction recruits CEP152 to the deuterosome. The interactions with CEP63 and DEUP1 are mutually exclusive. Interacts with CCDC66.

The protein localises to the cytoplasm. Its subcellular location is the cytoskeleton. It is found in the microtubule organizing center. The protein resides in the centrosome. It localises to the centriole. Necessary for centrosome duplication; the function also seems to involve CEP63, CDK5RAP2 and WDR62 through a stepwise assembled complex at the centrosome that recruits CDK2 required for centriole duplication. Acts as a molecular scaffold facilitating the interaction of PLK4 and CPAP, 2 molecules involved in centriole formation. Proposed to snatch PLK4 away from PLK4:CEP92 complexes in early G1 daughter centriole and to reposition PLK4 at the outer boundary of a newly forming CEP152 ring structure. Also plays a key role in deuterosome-mediated centriole amplification in multiciliated that can generate more than 100 centrioles. Overexpression of cep152 can drive amplification of centrioles. This is Centrosomal protein of 152 kDa (Cep152) from Mus musculus (Mouse).